Reading from the N-terminus, the 212-residue chain is MKSLFLILILCITIPLIFANESQYEDHPITKVTYGSMVKLAHVPTNFRLHSHKVSYGSSGGGSGQQSVTGFPENDDTNSLWVIKGPHGNRVLQGTVVKNGDIIRLVHSNTKKNLHSHLAVSPLTKQNEVSCFGENGEGDTGDNWIVETESGKEWMRGQVVRFKHADTKTYLQAIESAKYQNPIPGQIEISGGKSKNEDTKWRTEEGIYFDEK.

Residues 1-19 (MKSLFLILILCITIPLIFA) form the signal peptide. Asparagine 20 is a glycosylation site (N-linked (GlcNAc...) asparagine). 3 MIR domains span residues 29–86 (ITKV…IKGP), 94–149 (GTVV…VETE), and 151–206 (GKEW…TEEG).

It is found in the secreted. The sequence is that of Stromal cell-derived factor 2-like protein from Dictyostelium discoideum (Social amoeba).